Here is a 170-residue protein sequence, read N- to C-terminus: Translationally-controlled tumor protein homolog (170 aa).

The TCTP domain occupies 1–170 (MLIYSDIITG…WKHGLKETKV (170 aa)).

It belongs to the TCTP family.

Its subcellular location is the cytoplasm. The protein localises to the cytoskeleton. Involved in protein synthesis. Involved in microtubule stabilization. This chain is Translationally-controlled tumor protein homolog, found in Neurospora crassa (strain ATCC 24698 / 74-OR23-1A / CBS 708.71 / DSM 1257 / FGSC 987).